Here is a 164-residue protein sequence, read N- to C-terminus: NADPH-dependent 7-cyano-7-deazaguanine reductase (164 aa).

The active-site Thioimide intermediate is the cysteine 55. Aspartate 62 serves as the catalytic Proton donor. Substrate contacts are provided by residues 77–79 and 96–97; these read VES and HE.

It belongs to the GTP cyclohydrolase I family. QueF type 1 subfamily.

The protein localises to the cytoplasm. It catalyses the reaction 7-aminomethyl-7-carbaguanine + 2 NADP(+) = 7-cyano-7-deazaguanine + 2 NADPH + 3 H(+). It participates in tRNA modification; tRNA-queuosine biosynthesis. In terms of biological role, catalyzes the NADPH-dependent reduction of 7-cyano-7-deazaguanine (preQ0) to 7-aminomethyl-7-deazaguanine (preQ1). This chain is NADPH-dependent 7-cyano-7-deazaguanine reductase, found in Bacillus velezensis (strain DSM 23117 / BGSC 10A6 / LMG 26770 / FZB42) (Bacillus amyloliquefaciens subsp. plantarum).